Consider the following 207-residue polypeptide: Large ribosomal subunit protein uL4 (207 aa).

Residues arginine 45–isoleucine 78 form a disordered region. Positions glycine 60–glycine 71 are enriched in basic residues.

Belongs to the universal ribosomal protein uL4 family. Part of the 50S ribosomal subunit.

Its function is as follows. One of the primary rRNA binding proteins, this protein initially binds near the 5'-end of the 23S rRNA. It is important during the early stages of 50S assembly. It makes multiple contacts with different domains of the 23S rRNA in the assembled 50S subunit and ribosome. Forms part of the polypeptide exit tunnel. This Pediococcus pentosaceus (strain ATCC 25745 / CCUG 21536 / LMG 10740 / 183-1w) protein is Large ribosomal subunit protein uL4.